A 734-amino-acid chain; its full sequence is Photosystem I P700 chlorophyll a apoprotein A2 (734 aa).

Transmembrane regions (helical) follow at residues 46–69 (IFAS…FHVA), 135–158 (LYTG…LHLQ), 175–199 (LNHH…HVAI), 273–291 (MAHH…GHMY), 330–353 (IHFQ…QHMY), 369–395 (AALY…IFFI), 417–439 (AIIS…LYVH), and 517–535 (FLVH…LILV). [4Fe-4S] cluster is bound by residues C559 and C568. Helical transmembrane passes span 575–596 (AFYL…YWHW) and 643–665 (LSVW…MFLI). The chlorophyll a site is built by H654, M662, and Y670. W671 lines the phylloquinone pocket. Residues 707-727 (LVGLAHFSVGYIFTYAAFLIA) form a helical membrane-spanning segment.

The protein belongs to the PsaA/PsaB family. In terms of assembly, the PsaA/B heterodimer binds the P700 chlorophyll special pair and subsequent electron acceptors. PSI consists of a core antenna complex that captures photons, and an electron transfer chain that converts photonic excitation into a charge separation. The eukaryotic PSI reaction center is composed of at least 11 subunits. P700 is a chlorophyll a/chlorophyll a' dimer, A0 is one or more chlorophyll a, A1 is one or both phylloquinones and FX is a shared 4Fe-4S iron-sulfur center. is required as a cofactor.

The protein resides in the plastid. Its subcellular location is the chloroplast thylakoid membrane. The catalysed reaction is reduced [plastocyanin] + hnu + oxidized [2Fe-2S]-[ferredoxin] = oxidized [plastocyanin] + reduced [2Fe-2S]-[ferredoxin]. In terms of biological role, psaA and PsaB bind P700, the primary electron donor of photosystem I (PSI), as well as the electron acceptors A0, A1 and FX. PSI is a plastocyanin-ferredoxin oxidoreductase, converting photonic excitation into a charge separation, which transfers an electron from the donor P700 chlorophyll pair to the spectroscopically characterized acceptors A0, A1, FX, FA and FB in turn. Oxidized P700 is reduced on the lumenal side of the thylakoid membrane by plastocyanin. The protein is Photosystem I P700 chlorophyll a apoprotein A2 of Crucihimalaya wallichii (Rock-cress).